A 282-amino-acid polypeptide reads, in one-letter code: MKTFHTVAELRTALKIERLKDKKIVFVPTMGNLHDGHMSLIRKAKEEGDIIVSSIFVNPMQFSDQSDLERYPKTLEEDKRVLEANGCNYLFAPDALEMYPDGKRSQTQIEVVGISDILCGASRPGHFVGVSTVVTKLFNIVQPDTAIFGNKDFQQLKVIQDMVRDLSSNVRIIGVDTARNEDGLAMSSRNGYLTEEERRIAPTIYQTLLWAKEALLENRASHEDICEQAQQKLEAAGFRRDYFEIRAQENLQTPSEEEKRLVILTAAYLGKARLIDNLRVEL.

Residue 30 to 37 coordinates ATP; that stretch reads MGNLHDGH. Histidine 37 functions as the Proton donor in the catalytic mechanism. Glutamine 61 is a (R)-pantoate binding site. Glutamine 61 contacts beta-alanine. 149–152 serves as a coordination point for ATP; sequence GNKD. Glutamine 155 is a binding site for (R)-pantoate. Residues alanine 178 and 186–189 contribute to the ATP site; that span reads MSSR.

Belongs to the pantothenate synthetase family. Homodimer.

Its subcellular location is the cytoplasm. The enzyme catalyses (R)-pantoate + beta-alanine + ATP = (R)-pantothenate + AMP + diphosphate + H(+). It functions in the pathway cofactor biosynthesis; (R)-pantothenate biosynthesis; (R)-pantothenate from (R)-pantoate and beta-alanine: step 1/1. Catalyzes the condensation of pantoate with beta-alanine in an ATP-dependent reaction via a pantoyl-adenylate intermediate. The polypeptide is Pantothenate synthetase (Marinomonas sp. (strain MWYL1)).